We begin with the raw amino-acid sequence, 890 residues long: DNA mismatch repair protein MutS (890 aa).

645–652 (GPNMAGKS) lines the ATP pocket.

Belongs to the DNA mismatch repair MutS family.

This protein is involved in the repair of mismatches in DNA. It is possible that it carries out the mismatch recognition step. This protein has a weak ATPase activity. This Rickettsia conorii (strain ATCC VR-613 / Malish 7) protein is DNA mismatch repair protein MutS.